The chain runs to 471 residues: MASGQDKTHIDYAYELDITVKPDSRVPVFNREFATFTGAGVPLFSLGGGPIRYALAEVLAKFHARRGYYVVETPIIASTELFKVSGHIEFYRNNMYLFDIEGHEFAVKPMNCPYHILLFLNEVAKHRSKLPLPFKVFEFGRVHRYEPSGSIYGLLRVRGFTQDDAHIIVPGGRVIDVVYDVFEEMKLVLERLFKLGVSSETFKVRLSMSDKSLIGKEFMGSKEEWEGAEEALREAASRINEKYGIDIVELEGEAAFYGPKLDFIMMVEESGVSKEWQMGTIQFDFNLPRRFRLYDVVREEFGIEEVYIIHRALLGSIERFLGVYLEHRRGRMPFTLAPIQFAVIAVKTGGEVDREIEDLASSIAKGLLDKGFRVAVKGSSKTGLSSDVRHIESTAKPAVNVFIGAKEVREKVLDVRVFDLESMKRRRLAIAYGDAADAVENLAAVAEELESPVRSLSGQAPRIPADFSFML.

The catalytic stretch occupies residues 8–333 (THIDYAYELD…YLEHRRGRMP (326 aa)). Residues Cys-112, His-166, and His-310 each contribute to the Zn(2+) site.

This sequence belongs to the class-II aminoacyl-tRNA synthetase family. In terms of assembly, homodimer. Probably interacts with its editing subunit. Zn(2+) is required as a cofactor.

Its subcellular location is the cytoplasm. It carries out the reaction tRNA(Thr) + L-threonine + ATP = L-threonyl-tRNA(Thr) + AMP + diphosphate + H(+). In terms of biological role, catalyzes the attachment of threonine to tRNA(Thr) in a two-step reaction: L-threonine is first activated by ATP to form Thr-AMP and then transferred to the acceptor end of tRNA(Thr). This protein is probably not able to deacylate mischarged L-seryl-tRNA(Thr) as it lacks the appropriate domain. This Aeropyrum pernix (strain ATCC 700893 / DSM 11879 / JCM 9820 / NBRC 100138 / K1) protein is Threonine--tRNA ligase catalytic subunit.